The sequence spans 270 residues: Acyl-[acyl-carrier-protein]--UDP-N-acetylglucosamine O-acyltransferase (270 aa).

The protein belongs to the transferase hexapeptide repeat family. LpxA subfamily. Homotrimer.

The protein localises to the cytoplasm. It catalyses the reaction a (3R)-hydroxyacyl-[ACP] + UDP-N-acetyl-alpha-D-glucosamine = a UDP-3-O-[(3R)-3-hydroxyacyl]-N-acetyl-alpha-D-glucosamine + holo-[ACP]. It participates in glycolipid biosynthesis; lipid IV(A) biosynthesis; lipid IV(A) from (3R)-3-hydroxytetradecanoyl-[acyl-carrier-protein] and UDP-N-acetyl-alpha-D-glucosamine: step 1/6. In terms of biological role, involved in the biosynthesis of lipid A, a phosphorylated glycolipid that anchors the lipopolysaccharide to the outer membrane of the cell. This Helicobacter acinonychis (strain Sheeba) protein is Acyl-[acyl-carrier-protein]--UDP-N-acetylglucosamine O-acyltransferase.